Consider the following 485-residue polypeptide: Glutamyl-tRNA(Gln) amidotransferase subunit A (485 aa).

Catalysis depends on charge relay system residues Lys79 and Ser154. The active-site Acyl-ester intermediate is the Ser178.

The protein belongs to the amidase family. GatA subfamily. As to quaternary structure, heterotrimer of A, B and C subunits.

It catalyses the reaction L-glutamyl-tRNA(Gln) + L-glutamine + ATP + H2O = L-glutaminyl-tRNA(Gln) + L-glutamate + ADP + phosphate + H(+). Allows the formation of correctly charged Gln-tRNA(Gln) through the transamidation of misacylated Glu-tRNA(Gln) in organisms which lack glutaminyl-tRNA synthetase. The reaction takes place in the presence of glutamine and ATP through an activated gamma-phospho-Glu-tRNA(Gln). In Staphylococcus carnosus (strain TM300), this protein is Glutamyl-tRNA(Gln) amidotransferase subunit A.